Here is a 398-residue protein sequence, read N- to C-terminus: Polyferredoxin protein VhuB (398 aa).

4Fe-4S ferredoxin-type domains follow at residues 2–31, 25–53, 54–83, 82–111, 123–152, 152–181, 191–219, 220–249, 259–291, 300–331, and 339–368; these read AGIKIQEDACLVCNACSKACPTEAIEIAPF, AIEIAPFKTCTLCFSCASACPTGALVENN, GKLIYNSSKCIKCGNCATACPTGIKKVDDR, DRFPYSKGHCVLCEKCVDACPIDIISIPGK, QEPIKVTEACVGCSECVPVCPVDAISIEDE, ELAVIDTEKCIYCSVCAQTCPWNAIYVAGK, KSFTVTEECIGCEKCVEVCPGDMITYNRE, DLIVKLPEACPACHLCEQNCPVDAISLEVE, EGLVWYEDKCNYCGPCAIKCPLCPTNAINMINQ, TKTDKDPEFRMCIRCGACVMKCPTGALKMGKI, and NRIEFSPALCNECGECVDVCPQDTLKLTGD. Cys11, Cys14, Cys17, Cys21, Cys34, Cys37, Cys40, Cys44, Cys63, Cys66, Cys69, Cys73, Cys91, Cys94, Cys97, Cys101, Cys132, Cys135, Cys138, Cys142, Cys161, Cys164, Cys167, Cys171, Cys199, Cys202, Cys205, Cys209, Cys229, Cys232, Cys235, Cys239, Cys268, Cys271, Cys274, Cys278, Cys311, Cys314, Cys317, Cys321, Cys348, Cys351, Cys354, Cys358, Cys377, Cys380, Cys383, and Cys387 together coordinate [4Fe-4S] cluster.

[4Fe-4S] cluster is required as a cofactor.

In Methanococcus voltae, this protein is Polyferredoxin protein VhuB (vhuB).